Consider the following 427-residue polypeptide: Dihydroorotase (427 aa).

H60 and H62 together coordinate Zn(2+). Residues 62 to 64 (HLR) and N94 each bind substrate. Residues D152, H179, and H232 each coordinate Zn(2+). Position 278 (N278) interacts with substrate. Residue D305 participates in Zn(2+) binding. The active site involves D305. Residues H309 and 323–324 (FG) contribute to the substrate site.

The protein belongs to the metallo-dependent hydrolases superfamily. DHOase family. Class I DHOase subfamily. The cofactor is Zn(2+).

It carries out the reaction (S)-dihydroorotate + H2O = N-carbamoyl-L-aspartate + H(+). Its pathway is pyrimidine metabolism; UMP biosynthesis via de novo pathway; (S)-dihydroorotate from bicarbonate: step 3/3. Catalyzes the reversible cyclization of carbamoyl aspartate to dihydroorotate. This Geobacillus sp. (strain WCH70) protein is Dihydroorotase.